Consider the following 475-residue polypeptide: Aspartyl/glutamyl-tRNA(Asn/Gln) amidotransferase subunit B (475 aa).

The protein belongs to the GatB/GatE family. GatB subfamily. As to quaternary structure, heterotrimer of A, B and C subunits.

The catalysed reaction is L-glutamyl-tRNA(Gln) + L-glutamine + ATP + H2O = L-glutaminyl-tRNA(Gln) + L-glutamate + ADP + phosphate + H(+). It catalyses the reaction L-aspartyl-tRNA(Asn) + L-glutamine + ATP + H2O = L-asparaginyl-tRNA(Asn) + L-glutamate + ADP + phosphate + 2 H(+). Functionally, allows the formation of correctly charged Asn-tRNA(Asn) or Gln-tRNA(Gln) through the transamidation of misacylated Asp-tRNA(Asn) or Glu-tRNA(Gln) in organisms which lack either or both of asparaginyl-tRNA or glutaminyl-tRNA synthetases. The reaction takes place in the presence of glutamine and ATP through an activated phospho-Asp-tRNA(Asn) or phospho-Glu-tRNA(Gln). This is Aspartyl/glutamyl-tRNA(Asn/Gln) amidotransferase subunit B from Chlorobium phaeobacteroides (strain DSM 266 / SMG 266 / 2430).